A 370-amino-acid polypeptide reads, in one-letter code: Tomoregulin-1 (370 aa).

Positions Met1 to Ala36 are cleaved as a signal peptide. The Extracellular portion of the chain corresponds to Ser37 to Val320. An N-linked (GlcNAc...) asparagine glycan is attached at Asn53. Kazal-like domains follow at residues Ile88 to Ser135 and Val179 to Glu227. Intrachain disulfides connect Cys89-Cys119, Cys93-Cys112, Cys101-Cys133, Cys180-Cys211, Cys184-Cys204, Cys193-Cys225, Cys265-Cys278, Cys273-Cys289, and Cys291-Cys300. The region spanning Asn261–Asp301 is the EGF-like domain. A helical transmembrane segment spans residues Leu321–Ile341. The Cytoplasmic segment spans residues Thr342–Val370. Positions Asn349 to Val370 are disordered. The span at Gln356–Val370 shows a compositional bias: polar residues.

It belongs to the tomoregulin family. In terms of assembly, interacts with cripto. In terms of tissue distribution, expressed at highest levels in brain, and at lower levels in neuroendocrine tissues. Present in neurons from the diencephalon (at protein level).

Its subcellular location is the cell membrane. Inhibits nodal/nr-1 and bmp signaling during neural patterning through interaction with cripto. This chain is Tomoregulin-1 (tmeff1), found in Xenopus laevis (African clawed frog).